Reading from the N-terminus, the 319-residue chain is Ferrochelatase (319 aa).

His194 and Glu275 together coordinate Fe cation.

It belongs to the ferrochelatase family.

Its subcellular location is the cytoplasm. It catalyses the reaction heme b + 2 H(+) = protoporphyrin IX + Fe(2+). Its pathway is porphyrin-containing compound metabolism; protoheme biosynthesis; protoheme from protoporphyrin-IX: step 1/1. In terms of biological role, catalyzes the ferrous insertion into protoporphyrin IX. The polypeptide is Ferrochelatase (Vibrio vulnificus (strain YJ016)).